Reading from the N-terminus, the 861-residue chain is 1,4-alpha-glucan-branching enzyme (861 aa).

2 residues coordinate (1,4-alpha-D-glucosyl)n: tryptophan 173 and lysine 208. Aspartate 429 acts as the Nucleophile in catalysis. Residue glutamate 484 is the Proton donor of the active site.

This sequence belongs to the glycosyl hydrolase 13 family. GlgB subfamily. In terms of assembly, monomer.

The protein localises to the plastid. The protein resides in the chloroplast. It is found in the amyloplast. It catalyses the reaction Transfers a segment of a (1-&gt;4)-alpha-D-glucan chain to a primary hydroxy group in a similar glucan chain.. The protein operates within glycan biosynthesis; starch biosynthesis. In terms of biological role, catalyzes the formation of the alpha-1,6-glucosidic linkages in starch by scission of a 1,4-alpha-linked oligosaccharide from growing alpha-1,4-glucan chains and the subsequent attachment of the oligosaccharide to the alpha-1,6 position. This chain is 1,4-alpha-glucan-branching enzyme (SBE1), found in Solanum tuberosum (Potato).